We begin with the raw amino-acid sequence, 443 residues long: Histidinol dehydrogenase (443 aa).

NAD(+) is bound by residues tyrosine 133, glutamine 191, and asparagine 214. Substrate is bound by residues serine 240, glutamine 262, and histidine 265. Residues glutamine 262 and histidine 265 each coordinate Zn(2+). Residues glutamate 329 and histidine 330 each act as proton acceptor in the active site. Substrate-binding residues include histidine 330, aspartate 363, glutamate 417, and histidine 422. Residue aspartate 363 coordinates Zn(2+). A Zn(2+)-binding site is contributed by histidine 422.

Belongs to the histidinol dehydrogenase family. Homodimer. Requires Zn(2+) as cofactor.

The enzyme catalyses L-histidinol + 2 NAD(+) + H2O = L-histidine + 2 NADH + 3 H(+). It functions in the pathway amino-acid biosynthesis; L-histidine biosynthesis; L-histidine from 5-phospho-alpha-D-ribose 1-diphosphate: step 9/9. In terms of biological role, catalyzes the sequential NAD-dependent oxidations of L-histidinol to L-histidinaldehyde and then to L-histidine. The protein is Histidinol dehydrogenase of Blochmanniella pennsylvanica (strain BPEN).